The primary structure comprises 198 residues: Ribonuclease HII (198 aa).

Residues 10-198 enclose the RNase H type-2 domain; the sequence is HLVAGVDEVG…PVRRALGIAS (189 aa). The a divalent metal cation site is built by aspartate 16, glutamate 17, and aspartate 108.

It belongs to the RNase HII family. Mn(2+) serves as cofactor. The cofactor is Mg(2+).

The protein localises to the cytoplasm. The enzyme catalyses Endonucleolytic cleavage to 5'-phosphomonoester.. Its function is as follows. Endonuclease that specifically degrades the RNA of RNA-DNA hybrids. The sequence is that of Ribonuclease HII from Cronobacter sakazakii (strain ATCC BAA-894) (Enterobacter sakazakii).